The sequence spans 297 residues: MDGDGDPESVGQPEEASPEEQQEEACAEEANGGEERPEDDGEGEAAYLDELPEPLLLRVLAELPAAQLVQACRLVCLRWKELVDGAPLWLLKCQQEGLVPQDGPEDERDHWQQFYFLSKRRRNLLRNPCGEEDLEGWCDVEHGGDGWRVEELPGDCGVEFIHDESVKKYFASSFEWCRKAQIIDLQAEGYWEELLDTTQPAIVVKDWYSGRRDAGCLYELTVKLLSEHEDVLAEFNSGQVAVPADSDDGGWTEISHTFTDYGPGVRFIRFEHGGQDCVYWKGWFGARVTNSSVWVEP.

A disordered region spans residues 1-42; sequence MDGDGDPESVGQPEEASPEEQQEEACAEEANGGEERPEDDGE. Residues 16–27 show a composition bias toward acidic residues; the sequence is ASPEEQQEEACA. In terms of domain architecture, F-box spans 45–92; sequence AAYLDELPEPLLLRVLAELPAAQLVQACRLVCLRWKELVDGAPLWLLK. The 184-residue stretch at 114–297 folds into the FBA domain; sequence FYFLSKRRRN…VTNSSVWVEP (184 aa). Residues 211 to 213 and 279 to 280 each bind a carbohydrate; these read RRD and YW.

In terms of assembly, component of the SCF(FBXO2) complex consisting of CUL1, RBX1, SKP1 and FBXO2. Predominantly detected as heterodimer with SKP1; the heterodimer with SKP1 is not part of the SCF(FBXO2) complex.

Its subcellular location is the cytoplasm. It is found in the microsome membrane. The protein operates within protein modification; protein ubiquitination. In terms of biological role, substrate recognition component of a SCF (SKP1-CUL1-F-box protein) E3 ubiquitin-protein ligase complex that mediates the ubiquitination and subsequent proteasomal degradation of target proteins. Involved in the endoplasmic reticulum-associated degradation pathway (ERAD) for misfolded lumenal proteins by recognizing and binding sugar chains on unfolded glycoproteins that are retrotranslocated into the cytosol and promoting their ubiquitination and subsequent degradation. Prevents formation of cytosolic aggregates of unfolded glycoproteins that have been retrotranslocated into the cytosol. Able to recognize and bind denatured glycoproteins, preferentially those of the high-mannose type. The protein is F-box only protein 2 (FBXO2) of Bos taurus (Bovine).